The chain runs to 360 residues: Alpha-2-macroglobulin receptor-associated protein (360 aa).

Positions 1–33 (MAPLRDRVSTLPRLQLLVLLLLPLLLVPQPIAG) are cleaved as a signal peptide. 2 positions are modified to phosphoserine: serine 53 and serine 138. A coiled-coil region spans residues 222 to 302 (SKHSELKDRL…KHNHYQKQLE (81 aa)). Residues 240–356 (RLRKVSHQGY…DLSSRVSRAR (117 aa)) form an LDL receptor binding region. The N-linked (GlcNAc...) asparagine glycan is linked to asparagine 271. The Prevents secretion from ER motif lies at 357-360 (HNEL).

This sequence belongs to the alpha-2-MRAP family. Interacts with the LRP1/alpha-2-macroglobulin receptor heavy and light chains; the interaction is transient and coincides with a reduction of ligand binding by the receptor. Interacts with LRP2/glycoprotein 330. Interacts with LRP1B; binding is followed by internalization and degradation. Interacts with LDLR. Interacts with SORL1. Interacts with LRP1; this interaction is followed by rapid internalization. In terms of processing, N-glycosylated.

It is found in the rough endoplasmic reticulum lumen. It localises to the endoplasmic reticulum-Golgi intermediate compartment lumen. Its subcellular location is the golgi apparatus. The protein localises to the cis-Golgi network. The protein resides in the golgi apparatus lumen. It is found in the endosome lumen. It localises to the cell surface. Molecular chaperone for LDL receptor-related proteins that may regulate their ligand binding activity along the secretory pathway. The sequence is that of Alpha-2-macroglobulin receptor-associated protein (Lrpap1) from Rattus norvegicus (Rat).